The chain runs to 258 residues: Ribosomal RNA small subunit methyltransferase J (258 aa).

S-adenosyl-L-methionine is bound by residues 107–108 (RD), 123–124 (ER), 159–160 (SS), and D177.

The protein belongs to the methyltransferase superfamily. RsmJ family.

Its subcellular location is the cytoplasm. It carries out the reaction guanosine(1516) in 16S rRNA + S-adenosyl-L-methionine = N(2)-methylguanosine(1516) in 16S rRNA + S-adenosyl-L-homocysteine + H(+). Its function is as follows. Specifically methylates the guanosine in position 1516 of 16S rRNA. This chain is Ribosomal RNA small subunit methyltransferase J, found in Shewanella sediminis (strain HAW-EB3).